Reading from the N-terminus, the 213-residue chain is Cytochrome c biogenesis ATP-binding export protein CcmA (213 aa).

The ABC transporter domain occupies 7-213; it reads LKTKKLACQR…VRLENYKFTE (207 aa). 39 to 46 provides a ligand contact to ATP; the sequence is GHNGIGKT.

It belongs to the ABC transporter superfamily. CcmA exporter (TC 3.A.1.107) family. As to quaternary structure, the complex is composed of two ATP-binding proteins (CcmA) and two transmembrane proteins (CcmB).

Its subcellular location is the cell inner membrane. It catalyses the reaction heme b(in) + ATP + H2O = heme b(out) + ADP + phosphate + H(+). Functionally, part of the ABC transporter complex CcmAB involved in the biogenesis of c-type cytochromes; once thought to export heme, this seems not to be the case, but its exact role is uncertain. Responsible for energy coupling to the transport system. The sequence is that of Cytochrome c biogenesis ATP-binding export protein CcmA from Pasteurella multocida (strain Pm70).